The primary structure comprises 250 residues: Aquaporin (250 aa).

Topologically, residues 1 to 15 are cytoplasmic; that stretch reads MTRETLKTLQSTFGE. The chain crosses the membrane as a helical span at residues 16-36; that stretch reads MVASFVFGFAVYSALLGSALT. The Extracellular segment spans residues 37 to 42; that stretch reads EQSAAR. Residues 43-63 form a helical membrane-spanning segment; the sequence is VIVGLTVGFSGICVIYSFCDV. Residues 64 to 86 lie on the Cytoplasmic side of the membrane; the sequence is TVAHFNPAITLAAILTCKLGVLR. An NPA motif is present at residues 69-71; that stretch reads NPA. The helical transmembrane segment at 87–107 threads the bilayer; sequence GIGYIVAQYIGFILAVCALLP. Over 108-133 the chain is Extracellular; it reads CSPVGYKETLNIIRPTPSPFGGDNLN. A helical membrane pass occupies residues 134-154; that stretch reads VFFTEFFLTAILVHVAFATAV. The Cytoplasmic portion of the chain corresponds to 155-179; that stretch reads NPYKPKTDTEGKFVDPDEEEPVDRR. A helical transmembrane segment spans residues 180 to 200; that stretch reads ITAPLCIGLTLGFLAFLGLAS. Over 201 to 224 the chain is Extracellular; sequence SGGAFNPGLTLAPVIMSNTWNHFW. Positions 206 to 208 match the NPG motif; sequence NPG. A helical membrane pass occupies residues 225 to 245; sequence AYFAGQYLGGFVGGLLQVLVL. The Cytoplasmic portion of the chain corresponds to 246-250; the sequence is YKLSF.

This sequence belongs to the MIP/aquaporin (TC 1.A.8) family.

The protein localises to the cell membrane. Its function is as follows. Water channel required to facilitate the transport of water across membranes. Involved in osmotolerance. In Encephalitozoon cuniculi (strain GB-M1) (Microsporidian parasite), this protein is Aquaporin (AQP).